Here is a 340-residue protein sequence, read N- to C-terminus: Probable D,D-dipeptide transport system permease protein DdpB (340 aa).

Topologically, residues M1–C11 are periplasmic. Residues W12–I32 traverse the membrane as a helical segment. Over P33–A104 the chain is Cytoplasmic. The region spanning F97–Y327 is the ABC transmembrane type-1 domain. A helical transmembrane segment spans residues F105–W125. Residues R126–R135 lie on the Periplasmic side of the membrane. A helical transmembrane segment spans residues I136–L156. Topologically, residues F157–N199 are cytoplasmic. The chain crosses the membrane as a helical span at residues A200–A220. Over R221–G246 the chain is Periplasmic. Residues W247–A269 form a helical membrane-spanning segment. Over L270–L279 the chain is Cytoplasmic. The chain crosses the membrane as a helical span at residues T280–L300. D301 is a topological domain (periplasmic). Residues F302–V322 traverse the membrane as a helical segment. At V323–E340 the chain is on the cytoplasmic side.

This sequence belongs to the binding-protein-dependent transport system permease family. OppBC subfamily. As to quaternary structure, the complex is composed of two ATP-binding proteins (DdpD and DdpF), two transmembrane proteins (DdpB and DdpC) and a solute-binding protein (DdpA).

It localises to the cell inner membrane. Functionally, part of the ABC transporter complex DdpABCDF, which is probably involved in D,D-dipeptide transport. Probably responsible for the translocation of the substrate across the membrane. This Escherichia coli (strain K12) protein is Probable D,D-dipeptide transport system permease protein DdpB (ddpB).